Consider the following 301-residue polypeptide: GTPase Era (301 aa).

One can recognise an Era-type G domain in the interval 4-173 (KAGFVALIGK…LECISKYLSP (170 aa)). Residues 12 to 19 (GKPNAGKS) are G1. 12-19 (GKPNAGKS) lines the GTP pocket. A G2 region spans residues 38-42 (NATRK). Positions 64–67 (DTPG) are G3. Residues 64-68 (DTPGL) and 122-125 (SKID) contribute to the GTP site. A G4 region spans residues 122–125 (SKID). The segment at 152 to 154 (LSA) is G5. A KH type-2 domain is found at 204 to 280 (LSDEIPYESD…FLNLQVIAQK (77 aa)).

This sequence belongs to the TRAFAC class TrmE-Era-EngA-EngB-Septin-like GTPase superfamily. Era GTPase family. As to quaternary structure, monomer.

Its subcellular location is the cytoplasm. The protein resides in the cell inner membrane. Its function is as follows. An essential GTPase that binds both GDP and GTP, with rapid nucleotide exchange. Plays a role in 16S rRNA processing and 30S ribosomal subunit biogenesis and possibly also in cell cycle regulation and energy metabolism. The sequence is that of GTPase Era from Helicobacter pylori (strain G27).